We begin with the raw amino-acid sequence, 313 residues long: MTRTQYGSLRAGGLNWDSMPLKLFAGGNAKFWDPAGIDFSRDRADWESLTERERDYATRLCAQFIAGEESVTQDIQPFMSAMRAEGRLGDEMYLTQFAFEEAKHTQVFRLWLDAVGVSEDLHGYLDDLPAYREIFFDRLPDALGMLAADPSPAAQVRASVTYNHVVEGMLALTGYFAWHKICVDRGILPGMQELVHRIGDDERRHMAWGTFTCRRHVAADDANWSVFEARMNELIPIALRLTEEGFELYGDDTPFGLSLDEFMQYSADKGMRRFGTISSARGRPLAEIDLDYSPLQLEDTFAAEDRQALAATA.

Residues Glu68, Glu101, and His104 each contribute to the Mn(2+) site. Residues 71 to 162 (VTQDIQPFMS…AAQVRASVTY (92 aa)) constitute a cross-link (3-(O4'-tyrosyl)-valine (Val-Tyr)). Glu101 provides a ligand contact to Fe cation. Fe cation contacts are provided by Glu167, Glu202, and His205.

The protein belongs to the ribonucleoside diphosphate reductase small chain family. R2-like ligand binding oxidase subfamily. Homodimer. It depends on Fe cation as a cofactor. Mn(2+) serves as cofactor.

Functionally, probable oxidase that might be involved in lipid metabolism. This is R2-like ligand binding oxidase from Mycobacteroides abscessus (strain ATCC 19977 / DSM 44196 / CCUG 20993 / CIP 104536 / JCM 13569 / NCTC 13031 / TMC 1543 / L948) (Mycobacterium abscessus).